The chain runs to 123 residues: UPF0102 protein PSHAa2523 (123 aa).

The protein belongs to the UPF0102 family.

This chain is UPF0102 protein PSHAa2523, found in Pseudoalteromonas translucida (strain TAC 125).